Reading from the N-terminus, the 219-residue chain is Probable GTP-binding protein EngB (219 aa).

Residues 33 to 217 (GPLEIAFAGR…RAAICETVGH (185 aa)) enclose the EngB-type G domain. Residues 41–48 (GRSNVGKS), 68–72 (GRTQE), 95–98 (DMPG), 162–165 (TKTD), and 196–198 (TSS) contribute to the GTP site. Mg(2+) is bound by residues Ser48 and Thr70.

Belongs to the TRAFAC class TrmE-Era-EngA-EngB-Septin-like GTPase superfamily. EngB GTPase family. It depends on Mg(2+) as a cofactor.

Its function is as follows. Necessary for normal cell division and for the maintenance of normal septation. The chain is Probable GTP-binding protein EngB from Allorhizobium ampelinum (strain ATCC BAA-846 / DSM 112012 / S4) (Agrobacterium vitis (strain S4)).